Reading from the N-terminus, the 320-residue chain is Beta-ketoacyl-[acyl-carrier-protein] synthase III (320 aa).

Catalysis depends on residues C114 and H247. Positions 248 to 252 (QANRR) are ACP-binding. Residue N277 is part of the active site.

The protein belongs to the thiolase-like superfamily. FabH family. Homodimer.

Its subcellular location is the cytoplasm. It catalyses the reaction malonyl-[ACP] + acetyl-CoA + H(+) = 3-oxobutanoyl-[ACP] + CO2 + CoA. The protein operates within lipid metabolism; fatty acid biosynthesis. Catalyzes the condensation reaction of fatty acid synthesis by the addition to an acyl acceptor of two carbons from malonyl-ACP. Catalyzes the first condensation reaction which initiates fatty acid synthesis and may therefore play a role in governing the total rate of fatty acid production. Possesses both acetoacetyl-ACP synthase and acetyl transacylase activities. Its substrate specificity determines the biosynthesis of branched-chain and/or straight-chain of fatty acids. The protein is Beta-ketoacyl-[acyl-carrier-protein] synthase III of Neisseria gonorrhoeae (strain ATCC 700825 / FA 1090).